Consider the following 463-residue polypeptide: Cysteine--tRNA ligase (463 aa).

Cys-33 contributes to the Zn(2+) binding site. The short motif at 35 to 45 (PTVYDFAHIGN) is the 'HIGH' region element. Zn(2+) contacts are provided by Cys-221, His-246, and Glu-250. Positions 279–283 (KMSKS) match the 'KMSKS' region motif. Lys-282 contacts ATP.

The protein belongs to the class-I aminoacyl-tRNA synthetase family. In terms of assembly, monomer. Requires Zn(2+) as cofactor.

The protein localises to the cytoplasm. It catalyses the reaction tRNA(Cys) + L-cysteine + ATP = L-cysteinyl-tRNA(Cys) + AMP + diphosphate. In Rhizobium leguminosarum bv. trifolii (strain WSM2304), this protein is Cysteine--tRNA ligase.